A 500-amino-acid chain; its full sequence is Cytochrome P450 monooxygenase ausR (500 aa).

A helical membrane pass occupies residues G15–A35. C439 is a binding site for heme.

It belongs to the cytochrome P450 family. Heme is required as a cofactor.

It is found in the membrane. The protein operates within secondary metabolite biosynthesis; terpenoid biosynthesis. In terms of biological role, cytochrome P450 monooxygenase; part of the gene cluster that mediates the biosynthesis of calidodehydroaustin, a fungal meroterpenoid. The first step of the pathway is the synthesis of 3,5-dimethylorsellinic acid by the polyketide synthase ausA. 3,5-dimethylorsellinic acid is then prenylated by the polyprenyl transferase ausN. Further epoxidation by the FAD-dependent monooxygenase ausM and cyclization by the probable terpene cyclase ausL lead to the formation of protoaustinoid A. Protoaustinoid A is then oxidized to spiro-lactone preaustinoid A3 by the combined action of the FAD-binding monooxygenases ausB and ausC, and the dioxygenase ausE. Acid-catalyzed keto-rearrangement and ring contraction of the tetraketide portion of preaustinoid A3 by ausJ lead to the formation of preaustinoid A4. The aldo-keto reductase ausK, with the help of ausH, is involved in the next step by transforming preaustinoid A4 into isoaustinone which is in turn hydroxylated by the P450 monooxygenase ausI to form austinolide. The cytochrome P450 monooxygenase ausG modifies austinolide to austinol. Austinol is further acetylated to austin by the O-acetyltransferase ausP, which spontaneously changes to dehydroaustin. The cytochrome P450 monooxygenase ausR then converts dehydroaustin is into 7-dehydrodehydroaustin. The hydroxylation catalyzed by ausR permits the O-acetyltransferase ausQ to add an additional acetyl group to the molecule, leading to the formation of acetoxydehydroaustin. The short chain dehydrogenase ausT catalyzes the reduction of the double bond present between carbon atoms 1 and 2 to convert 7-dehydrodehydroaustin into 1,2-dihydro-7-hydroxydehydroaustin. AusQ catalyzes not only an acetylation reaction but also the addition of the PKS ausV diketide product to 1,2-dihydro-7-hydroxydehydroaustin, forming precalidodehydroaustin. Finally, the iron/alpha-ketoglutarate-dependent dioxygenase converts precalidodehydroaustin into calidodehydroaustin. This chain is Cytochrome P450 monooxygenase ausR, found in Aspergillus calidoustus.